Here is a 254-residue protein sequence, read N- to C-terminus: MLTLLSPAKKLLSISKHYSKETSNPLLLDKALQLVKIMKLKSVEQIADLMDLSRQLAELNYERYQNFDLKNNPMNHSYPALFLFQGDVYQGLNANSWKDEEIEYAQSHLGILSGLYGFLRPLDRIQPYRLEMGVNLENPAGKNLYAFWSKIVTNILNQILAEQSNPVLINLASTEYFKVVDEKKLSYPLVTINFYEQKNSELKMIGILAKKARGMMAKYIMQNRIDSIEQIKEFSESGYLFNKEISSPNSLNFI.

The protein belongs to the UPF0246 family.

The protein is UPF0246 protein lpp1320 of Legionella pneumophila (strain Paris).